The sequence spans 120 residues: Crustacean hyperglycemic hormones 1 (120 aa).

Positions 1 to 27 (MTAFRMVWSMLLASLLMLLVASSTAPA) are cleaved as a signal peptide. Disulfide bonds link C53–C89, C69–C85, and C72–C98. A Valine amide modification is found at V118.

It belongs to the arthropod CHH/MIH/GIH/VIH hormone family.

Its subcellular location is the secreted. In terms of biological role, hormone found in the sinus gland of isopods and decapods which controls the blood sugar level. Has a secretagogue action over the amylase released from the midgut gland. May act as a stress hormone and may be involved in the control of molting and reproduction. This is Crustacean hyperglycemic hormones 1 (CHH1) from Penaeus monodon (Giant tiger prawn).